A 116-amino-acid chain; its full sequence is G antigen 2D (116 aa).

The disordered stretch occupies residues 1-116 (MSWRGRSTYR…PEEGEKQSQC (116 aa)). 2 stretches are compositionally biased toward acidic residues: residues 31 to 44 (FSDE…EEGE) and 86 to 95 (ECEDGPDGQE). Basic and acidic residues predominate over residues 102 to 116 (EEVKTPEEGEKQSQC).

Belongs to the GAGE family. As to expression, not expressed in normal tissues, except in testis, but expressed by a large proportion of tumors of various histological origins.

This chain is G antigen 2D (GAGE2D), found in Homo sapiens (Human).